The following is a 744-amino-acid chain: Catalase-peroxidase (744 aa).

Residues 108–231 constitute a cross-link (tryptophyl-tyrosyl-methioninium (Trp-Tyr) (with M-257)); sequence WHSAGTYRIS…LAAVQMGLIY (124 aa). H109 functions as the Proton acceptor in the catalytic mechanism. Residues 231–257 constitute a cross-link (tryptophyl-tyrosyl-methioninium (Tyr-Met) (with W-108)); the sequence is YVNPEGPNGNPDPIAAARDIRETFRRM. Residue H272 coordinates heme b. Positions 353–372 are disordered; the sequence is ANQWKPKDGAGAGTVPDAHD.

Belongs to the peroxidase family. Peroxidase/catalase subfamily. In terms of assembly, homodimer or homotetramer. Heme b serves as cofactor. In terms of processing, formation of the three residue Trp-Tyr-Met cross-link is important for the catalase, but not the peroxidase activity of the enzyme.

It catalyses the reaction H2O2 + AH2 = A + 2 H2O. The catalysed reaction is 2 H2O2 = O2 + 2 H2O. Functionally, bifunctional enzyme with both catalase and broad-spectrum peroxidase activity. The polypeptide is Catalase-peroxidase (Frankia casuarinae (strain DSM 45818 / CECT 9043 / HFP020203 / CcI3)).